A 392-amino-acid polypeptide reads, in one-letter code: Putative nickel insertion protein (392 aa).

The protein belongs to the LarC family.

The polypeptide is Putative nickel insertion protein (Methanothrix thermoacetophila (strain DSM 6194 / JCM 14653 / NBRC 101360 / PT) (Methanosaeta thermophila)).